The following is a 926-amino-acid chain: Up-regulator of cell proliferation (926 aa).

Residue serine 3 is modified to Phosphoserine. The VLIG-type G domain maps to 689 to 924 (RSRLVVLSAL…NIQQLIELLR (236 aa)).

It belongs to the TRAFAC class dynamin-like GTPase superfamily. Very large inducible GTPase (VLIG) family.

It is found in the cytoplasm. The protein resides in the nucleus. May be involved in cell cycle progression through the regulation of cyclin D1 expression. The polypeptide is Up-regulator of cell proliferation (Urgcp) (Mus musculus (Mouse)).